The following is a 263-amino-acid chain: Non-homologous end joining protein Ku 3 (263 aa).

The Ku domain maps to 6 to 169; the sequence is FGLVSVPVQL…WADEVRDPHR (164 aa).

The protein belongs to the prokaryotic Ku family. As to quaternary structure, homodimer. Interacts with LigD.

In terms of biological role, with LigD forms a non-homologous end joining (NHEJ) DNA repair enzyme, which repairs dsDNA breaks with reduced fidelity. Binds linear dsDNA with 5'- and 3'- overhangs but not closed circular dsDNA nor ssDNA. Recruits and stimulates the ligase activity of LigD. This Saccharopolyspora erythraea (strain ATCC 11635 / DSM 40517 / JCM 4748 / NBRC 13426 / NCIMB 8594 / NRRL 2338) protein is Non-homologous end joining protein Ku 3.